A 957-amino-acid polypeptide reads, in one-letter code: Vacuolar membrane protease (957 aa).

At 1 to 10 the chain is on the cytoplasmic side; it reads MARYNPFSFT. A helical membrane pass occupies residues 11 to 31; sequence PGPVVFFTTVIYVGLFAALLV. Residues 32-369 lie on the Vacuolar side of the membrane; sequence THLTVPDYPS…RVFVVFQLHT (338 aa). N-linked (GlcNAc...) asparagine glycosylation is found at N48, N105, and N136. 2 residues coordinate Zn(2+): H152 and D164. The Proton acceptor role is filled by E198. Residues E199, E224, and H297 each coordinate Zn(2+). Residues 370–390 form a helical membrane-spanning segment; it reads LFALCVTLLVVAPIALIGLTF. Topologically, residues 391 to 423 are cytoplasmic; that stretch reads GLSKADKNYLLARKAFVYSSDDDNPVQLYGWRG. The chain crosses the membrane as a helical span at residues 424–444; that stretch reads FFRFPIVFVSATAVVVALAYL. The Vacuolar segment spans residues 445 to 450; the sequence is LVRFNA. Residues 451 to 471 traverse the membrane as a helical segment; the sequence is FIIYSSPFAVWSMMLSAWFFV. The Cytoplasmic segment spans residues 472 to 490; the sequence is AWFFSRGADAMRPSALQRM. The helical transmembrane segment at 491 to 511 threads the bilayer; it reads YALIWLFIGSFVLLTIITVFV. The Vacuolar portion of the chain corresponds to 512–521; the sequence is NNYQVVAGYP. Residues 522–542 form a helical membrane-spanning segment; sequence ALFYFAVVFAALMLSYLELFF. Over 543-642 the chain is Cytoplasmic; the sequence is APTKSAYARH…YPGEQEWSGK (100 aa). Disordered regions lie at residues 560 to 591 and 603 to 628; these read RRNS…DATE and FTRY…RRLD. Over residues 564-577 the composition is skewed to polar residues; it reads ESASRPLTGSTTAA. Residues 643–663 traverse the membrane as a helical segment; the sequence is LPSWIWIIQLLLLAPLVIVLV. Residues 664 to 685 lie on the Vacuolar side of the membrane; the sequence is GQVALLLTSALYQTPSDGNSPL. Residues 686–706 traverse the membrane as a helical segment; sequence FIYLAIAALSVLLLAPTGPFI. Residues 707–713 are Cytoplasmic-facing; sequence HRFTYHV. The chain crosses the membrane as a helical span at residues 714–734; sequence PTFLFLVCLATVIYNLVAFPF. Over 735-957 the chain is Vacuolar; the sequence is SRDHRLKVYF…LVEGFKQFEI (223 aa). N-linked (GlcNAc...) asparagine glycans are attached at residues N782, N818, and N834.

This sequence belongs to the peptidase M28 family. Requires Zn(2+) as cofactor.

The protein resides in the vacuole membrane. Functionally, may be involved in vacuolar sorting and osmoregulation. This is Vacuolar membrane protease from Pyrenophora tritici-repentis (strain Pt-1C-BFP) (Wheat tan spot fungus).